We begin with the raw amino-acid sequence, 99 residues long: NADH-quinone oxidoreductase subunit K (99 aa).

Helical transmembrane passes span 3–23 (PANY…GVLL), 28–48 (IVMF…FVTF), and 59–79 (MIAF…LAII).

It belongs to the complex I subunit 4L family. NDH-1 is composed of 14 different subunits. Subunits NuoA, H, J, K, L, M, N constitute the membrane sector of the complex.

The protein localises to the cell membrane. It catalyses the reaction a quinone + NADH + 5 H(+)(in) = a quinol + NAD(+) + 4 H(+)(out). In terms of biological role, NDH-1 shuttles electrons from NADH, via FMN and iron-sulfur (Fe-S) centers, to quinones in the respiratory chain. The immediate electron acceptor for the enzyme in this species is believed to be a menaquinone. Couples the redox reaction to proton translocation (for every two electrons transferred, four hydrogen ions are translocated across the cytoplasmic membrane), and thus conserves the redox energy in a proton gradient. The chain is NADH-quinone oxidoreductase subunit K from Mycobacterium bovis (strain ATCC BAA-935 / AF2122/97).